We begin with the raw amino-acid sequence, 728 residues long: Catalase-peroxidase (728 aa).

A signal peptide spans 1 to 16 (MDNPTDSAGKCPVAHG). The tract at residues 1–26 (MDNPTDSAGKCPVAHGNTPRSRSNRD) is disordered. Residues 96–218 (WHSAGTYRIT…LGAVQMGFIY (123 aa)) constitute a cross-link (tryptophyl-tyrosyl-methioninium (Trp-Tyr) (with M-244)). Catalysis depends on histidine 97, which acts as the Proton acceptor. The tryptophyl-tyrosyl-methioninium (Tyr-Met) (with W-96) cross-link spans 218-244 (YVNPEGPNGNSDPLASARDIRETFARM). A heme b-binding site is contributed by histidine 259.

The protein belongs to the peroxidase family. Peroxidase/catalase subfamily. As to quaternary structure, homodimer or homotetramer. Heme b is required as a cofactor. In terms of processing, formation of the three residue Trp-Tyr-Met cross-link is important for the catalase, but not the peroxidase activity of the enzyme.

The catalysed reaction is H2O2 + AH2 = A + 2 H2O. It catalyses the reaction 2 H2O2 = O2 + 2 H2O. Its function is as follows. Bifunctional enzyme with both catalase and broad-spectrum peroxidase activity. This chain is Catalase-peroxidase, found in Rhizobium leguminosarum bv. phaseoli.